Reading from the N-terminus, the 316-residue chain is Transaldolase (316 aa).

Lys-132 acts as the Schiff-base intermediate with substrate in catalysis.

Belongs to the transaldolase family. Type 1 subfamily. As to quaternary structure, homodimer.

Its subcellular location is the cytoplasm. The enzyme catalyses D-sedoheptulose 7-phosphate + D-glyceraldehyde 3-phosphate = D-erythrose 4-phosphate + beta-D-fructose 6-phosphate. Its pathway is carbohydrate degradation; pentose phosphate pathway; D-glyceraldehyde 3-phosphate and beta-D-fructose 6-phosphate from D-ribose 5-phosphate and D-xylulose 5-phosphate (non-oxidative stage): step 2/3. Functionally, transaldolase is important for the balance of metabolites in the pentose-phosphate pathway. The polypeptide is Transaldolase (Aeromonas salmonicida (strain A449)).